A 312-amino-acid chain; its full sequence is Envelope glycoprotein K (312 aa).

Residues 1-20 (MLLGGRPLHLLVLGVMGAYA) form the signal peptide. Residues 21-91 (GLGAYYATVA…VVYARRDCRA (71 aa)) lie on the Extracellular side of the membrane. N-linked (GlcNAc...) asparagine; by host glycans are attached at residues asparagine 58 and asparagine 67. Residues 92–112 (YLWDVHFRLAAVAWLLYAAFV) traverse the membrane as a helical segment. At 113-187 (YARQERRMFG…DPITLAHRHP (75 aa)) the chain is on the cytoplasmic side. A helical transmembrane segment spans residues 188–208 (TLIALILLELGLRLGARMALF). Residues 209–227 (TTLGVTRAPCALVFPLYAR) lie on the Extracellular side of the membrane. The chain crosses the membrane as a helical span at residues 228–248 (ALVWIFVLAVGALELLAATLP). At 249–280 (HIARVSGATATPARSDGGRAALGVCGACCSTV) the chain is on the cytoplasmic side. The chain crosses the membrane as a helical span at residues 281–301 (LAGIFAKALYLCLLVGGVLLF). Residues 302 to 312 (LHYERHITIFG) are Extracellular-facing.

Belongs to the alphaherpesvirinae glycoprotein K family. As to quaternary structure, interacts (via UL20 interaction region) with protein UL20 homolog (via N-terminus); this interaction probably plays a role in the coordinate transport of protein UL20 homolog and gK to the trans-Golgi network (TGN), and is required for the cell surface expression of gK. Post-translationally, N-glycosylated.

The protein resides in the host cell membrane. Its subcellular location is the host endosome membrane. It localises to the host Golgi apparatus membrane. In terms of biological role, glycoprotein that probably modulates membrane fusion events during secondary envelopment of cytoplasmic capsids that bud into specific trans-Golgi network (TGN)-derived membranes. The polypeptide is Envelope glycoprotein K (gK) (Sus scrofa (Pig)).